The sequence spans 155 residues: Acyl-CoA-binding domain-containing protein 3 (155 aa).

One can recognise an ACB domain in the interval leucine 3–alanine 88. An acyl-CoA is bound by residues lysine 15, tyrosine 30 to lysine 34, lysine 56, and tyrosine 75.

Belongs to the ACBP family. As to expression, highly expressed in leaves. Expressed at low levels in roots and seeds.

It is found in the cytoplasm. The protein resides in the cytosol. Binds medium- and long-chain acyl-CoA esters with high affinity. Can interact in vitro with linolenoyl-CoA. Binds phosphatidic acid (PA) and phosphatidylcholine (PC) in vitro. May play a role in the biosynthesis of phospholipids. This Oryza sativa subsp. japonica (Rice) protein is Acyl-CoA-binding domain-containing protein 3.